The primary structure comprises 247 residues: LOB domain-containing protein 38 (247 aa).

One can recognise an LOB domain in the interval 1 to 107 (MSCNGCRVLR…VETVLRGGSL (107 aa)). Residues 157–170 (FSSSRSRSRSTASP) show a composition bias toward low complexity. The interval 157–184 (FSSSRSRSRSTASPPKRKRLSSEQQPSS) is disordered.

This sequence belongs to the LOB domain-containing protein family. Expressed in young shoots, roots, stems, leaves and flowers.

This Arabidopsis thaliana (Mouse-ear cress) protein is LOB domain-containing protein 38 (LBD38).